Here is a 35-residue protein sequence, read N- to C-terminus: Photosystem II reaction center protein T (35 aa).

A helical membrane pass occupies residues 3–23; sequence AFAYTLLMTLVVATLFFAVAF.

This sequence belongs to the PsbT family. PSII is composed of 1 copy each of membrane proteins PsbA, PsbB, PsbC, PsbD, PsbE, PsbF, PsbH, PsbI, PsbJ, PsbK, PsbL, PsbM, PsbT, PsbX, PsbY, Psb30/Ycf12, peripheral proteins PsbO, CyanoQ (PsbQ), PsbU, PsbV and a large number of cofactors. It forms dimeric complexes.

The protein localises to the cellular thylakoid membrane. In terms of biological role, found at the monomer-monomer interface of the photosystem II (PS II) dimer, plays a role in assembly and dimerization of PSII. PSII is a light-driven water plastoquinone oxidoreductase, using light energy to abstract electrons from H(2)O, generating a proton gradient subsequently used for ATP formation. The protein is Photosystem II reaction center protein T of Prochlorococcus marinus (strain MIT 9303).